The following is a 375-amino-acid chain: Putative fimbrium tip subunit Fim1C (375 aa).

The first 16 residues, 1-16 (MKLLANIFLSGLAILA), serve as a signal peptide directing secretion. The N-palmitoyl cysteine moiety is linked to residue Cys-17. Cys-17 carries the S-diacylglycerol cysteine lipid modification. The propeptide occupies 17 to 47 (CVSCSKDEDPVLPLEGAKLSVAVKASGTATK).

This sequence belongs to the bacteroidetes fimbrillin superfamily. FimA/Mfa1 family. As to quaternary structure, may be part of the fimbrial tip.

The protein localises to the fimbrium. Its subcellular location is the cell outer membrane. Probably a component of the fimbrium tip. Fimbriae are filamentous appendages on the cell surface that mediate cell adhesion and biofilm formation. In Parabacteroides distasonis (strain ATCC 8503 / DSM 20701 / CIP 104284 / JCM 5825 / NCTC 11152), this protein is Putative fimbrium tip subunit Fim1C.